A 100-amino-acid polypeptide reads, in one-letter code: Urease subunit gamma (100 aa).

This sequence belongs to the urease gamma subunit family. In terms of assembly, heterotrimer of UreA (gamma), UreB (beta) and UreC (alpha) subunits. Three heterotrimers associate to form the active enzyme.

The protein localises to the cytoplasm. It catalyses the reaction urea + 2 H2O + H(+) = hydrogencarbonate + 2 NH4(+). The protein operates within nitrogen metabolism; urea degradation; CO(2) and NH(3) from urea (urease route): step 1/1. In Blochmanniella floridana, this protein is Urease subunit gamma.